A 244-amino-acid chain; its full sequence is Phosphatidylserine decarboxylase proenzyme (244 aa).

Residue Ser-212 is the Schiff-base intermediate with substrate; via pyruvic acid of the active site. At Ser-212 the chain carries Pyruvic acid (Ser); by autocatalysis.

It belongs to the phosphatidylserine decarboxylase family. PSD-A subfamily. Heterodimer of a large membrane-associated beta subunit and a small pyruvoyl-containing alpha subunit. Requires pyruvate as cofactor. Is synthesized initially as an inactive proenzyme. Formation of the active enzyme involves a self-maturation process in which the active site pyruvoyl group is generated from an internal serine residue via an autocatalytic post-translational modification. Two non-identical subunits are generated from the proenzyme in this reaction, and the pyruvate is formed at the N-terminus of the alpha chain, which is derived from the carboxyl end of the proenzyme. The post-translation cleavage follows an unusual pathway, termed non-hydrolytic serinolysis, in which the side chain hydroxyl group of the serine supplies its oxygen atom to form the C-terminus of the beta chain, while the remainder of the serine residue undergoes an oxidative deamination to produce ammonia and the pyruvoyl prosthetic group on the alpha chain.

Its subcellular location is the cell membrane. It catalyses the reaction a 1,2-diacyl-sn-glycero-3-phospho-L-serine + H(+) = a 1,2-diacyl-sn-glycero-3-phosphoethanolamine + CO2. Its pathway is phospholipid metabolism; phosphatidylethanolamine biosynthesis; phosphatidylethanolamine from CDP-diacylglycerol: step 2/2. Catalyzes the formation of phosphatidylethanolamine (PtdEtn) from phosphatidylserine (PtdSer). This Granulibacter bethesdensis (strain ATCC BAA-1260 / CGDNIH1) protein is Phosphatidylserine decarboxylase proenzyme.